The sequence spans 261 residues: Intermembrane phospholipid transport system permease protein MlaE (261 aa).

Over 1–12 the chain is Cytoplasmic; sequence MIVNFISALGKQ. The helical transmembrane segment at 13–33 threads the bilayer; it reads VIDFFRALGRAGFMLFGALIG. Residues 34 to 49 are Periplasmic-facing; it reads KPQIRKHFPLLVKQMH. Residues 50 to 70 traverse the membrane as a helical segment; that stretch reads VLGVQSLLIILLSGLFIGMVL. The Cytoplasmic segment spans residues 71 to 147; it reads GLQGYVVLID…DPLRRVIAPR (77 aa). A helical membrane pass occupies residues 148–168; that stretch reads FWAGVISMPVLSILFIAIGIW. Over 169-198 the chain is Periplasmic; the sequence is GGSLVGVDWKGVDSGSFWSVMQNSVSWSYD. A helical transmembrane segment spans residues 199 to 219; sequence ILNGFIKAVFFAVAVTWIALF. The Cytoplasmic segment spans residues 220–238; that stretch reads NGYDCMPTSEGISQATTRT. Residues 239 to 259 form a helical membrane-spanning segment; that stretch reads VVHASLVVLGLDFILTAIMFG. At 260–261 the chain is on the periplasmic side; sequence AG.

It belongs to the MlaE permease family. The complex is composed of two ATP-binding proteins (MlaF), two transmembrane proteins (MlaE), two cytoplasmic solute-binding proteins (MlaB) and six periplasmic solute-binding proteins (MlaD).

Its subcellular location is the cell inner membrane. In terms of biological role, part of the ABC transporter complex MlaFEDB, which is involved in a phospholipid transport pathway that maintains lipid asymmetry in the outer membrane by retrograde trafficking of phospholipids from the outer membrane to the inner membrane. Probably responsible for the translocation of the substrate across the membrane. The sequence is that of Intermembrane phospholipid transport system permease protein MlaE from Haemophilus influenzae (strain ATCC 51907 / DSM 11121 / KW20 / Rd).